The sequence spans 20 residues: Antiviral protein Y3 (20 aa).

The polypeptide is Antiviral protein Y3 (Pleurotus citrinopileatus (Golden oyster mushroom)).